Reading from the N-terminus, the 262-residue chain is Acyl-[acyl-carrier-protein]--UDP-N-acetylglucosamine O-acyltransferase (262 aa).

It belongs to the transferase hexapeptide repeat family. LpxA subfamily. Homotrimer.

The protein localises to the cytoplasm. It carries out the reaction a (3R)-hydroxyacyl-[ACP] + UDP-N-acetyl-alpha-D-glucosamine = a UDP-3-O-[(3R)-3-hydroxyacyl]-N-acetyl-alpha-D-glucosamine + holo-[ACP]. The protein operates within glycolipid biosynthesis; lipid IV(A) biosynthesis; lipid IV(A) from (3R)-3-hydroxytetradecanoyl-[acyl-carrier-protein] and UDP-N-acetyl-alpha-D-glucosamine: step 1/6. Involved in the biosynthesis of lipid A, a phosphorylated glycolipid that anchors the lipopolysaccharide to the outer membrane of the cell. This is Acyl-[acyl-carrier-protein]--UDP-N-acetylglucosamine O-acyltransferase from Salmonella arizonae (strain ATCC BAA-731 / CDC346-86 / RSK2980).